The following is a 403-amino-acid chain: Tyrosine--tRNA ligase (403 aa).

Positions 42 to 51 (PTAPDLHLGH) match the 'HIGH' region motif. A 'KMSKS' region motif is present at residues 226 to 230 (KMSKS). Lys-229 is an ATP binding site. The S4 RNA-binding domain maps to 339–400 (LRIASLLTAA…GKRNFARVSL (62 aa)).

This sequence belongs to the class-I aminoacyl-tRNA synthetase family. TyrS type 2 subfamily. As to quaternary structure, homodimer.

The protein localises to the cytoplasm. The enzyme catalyses tRNA(Tyr) + L-tyrosine + ATP = L-tyrosyl-tRNA(Tyr) + AMP + diphosphate + H(+). Catalyzes the attachment of tyrosine to tRNA(Tyr) in a two-step reaction: tyrosine is first activated by ATP to form Tyr-AMP and then transferred to the acceptor end of tRNA(Tyr). In Xanthomonas oryzae pv. oryzae (strain MAFF 311018), this protein is Tyrosine--tRNA ligase.